The following is a 196-amino-acid chain: Imidazoleglycerol-phosphate dehydratase (196 aa).

This sequence belongs to the imidazoleglycerol-phosphate dehydratase family.

It localises to the cytoplasm. It carries out the reaction D-erythro-1-(imidazol-4-yl)glycerol 3-phosphate = 3-(imidazol-4-yl)-2-oxopropyl phosphate + H2O. The protein operates within amino-acid biosynthesis; L-histidine biosynthesis; L-histidine from 5-phospho-alpha-D-ribose 1-diphosphate: step 6/9. In Akkermansia muciniphila (strain ATCC BAA-835 / DSM 22959 / JCM 33894 / BCRC 81048 / CCUG 64013 / CIP 107961 / Muc), this protein is Imidazoleglycerol-phosphate dehydratase.